Consider the following 122-residue polypeptide: Holo-[acyl-carrier-protein] synthase (122 aa).

Positions 9 and 58 each coordinate Mg(2+).

It belongs to the P-Pant transferase superfamily. AcpS family. Mg(2+) is required as a cofactor.

It is found in the cytoplasm. It catalyses the reaction apo-[ACP] + CoA = holo-[ACP] + adenosine 3',5'-bisphosphate + H(+). Functionally, transfers the 4'-phosphopantetheine moiety from coenzyme A to a Ser of acyl-carrier-protein. The chain is Holo-[acyl-carrier-protein] synthase from Chlamydia caviae (strain ATCC VR-813 / DSM 19441 / 03DC25 / GPIC) (Chlamydophila caviae).